The chain runs to 155 residues: Myelin basic protein (155 aa).

2 disordered regions span residues 1–70 (MASA…GRQT) and 109–155 (TDGQ…PARR). N-acetylalanine is present on A2. Basic and acidic residues-rich tracts occupy residues 37 to 49 (GSRKVPEKGKEPA) and 123 to 134 (KSKEAYRGRRDG).

The protein belongs to the myelin basic protein family.

The protein resides in the myelin membrane. Its function is as follows. This protein may function to maintain proper structure of myelin. The chain is Myelin basic protein (MBP) from Heterodontus francisci (Horn shark).